A 236-amino-acid polypeptide reads, in one-letter code: Bax inhibitor 1 (236 aa).

The Cytoplasmic portion of the chain corresponds to 1–29; sequence MNIFDRKINFDALFKFSHITPSTQQHLKK. A Glycyl lysine isopeptide (Lys-Gly) (interchain with G-Cter in ubiquitin) cross-link involves residue K7. Residues 30–50 form a helical membrane-spanning segment; sequence VYASFALCMFVAAAGAYIHVV. Topologically, residues 51 to 52 are lumenal; that stretch reads TH. The chain crosses the membrane as a helical span at residues 53–73; sequence FIQAGLLSALGSLGLMIWLMA. Residues 74 to 86 lie on the Cytoplasmic side of the membrane; the sequence is TPHSHETEQKRLG. Residues 87-107 traverse the membrane as a helical segment; that stretch reads LLAGFAFLTGVGLGPALDLCI. Residues 108–112 lie on the Lumenal side of the membrane; it reads AINPS. A helical membrane pass occupies residues 113-133; the sequence is ILPTAFMGTAMIFTCFTLSAL. Topologically, residues 134 to 139 are cytoplasmic; sequence YARRRS. A helical membrane pass occupies residues 140-160; sequence YLFLGGILMSAMSLMLLSSLG. Topologically, residues 161–166 are lumenal; sequence NLFFGS. The helical transmembrane segment at 167–187 threads the bilayer; sequence VWLFQANLYMGLVVMCGFVLF. Over 188-206 the chain is Cytoplasmic; it reads DTQLIIEKAENGDKDYIWH. The segment at residues 207-227 is an intramembrane region (helical); sequence CVDLFLDFVTLFRKLMMILAM. At 228-236 the chain is on the cytoplasmic side; sequence NEKDKKKKK.

Belongs to the BI1 family. Interacts with BCL2 and BCL2L1. Interacts with ERN1. In terms of processing, ubiquitinated by BFAR, leading to proteasomal degradation.

The protein localises to the endoplasmic reticulum membrane. Functionally, endoplasmic reticulum (ER)-resident protein that confers cellular protection as an anti-apoptotic protein by limiting multiple stress-inducing pathways surrounding the endoplasmic reticulum and mitochondria. Inhibits the activities of the key sensor for the endoplasmic reticulum unfolded protein response IRE1alpha/ERN1 both directly and by blocking BAX/BAK binding. Modulates ER calcium homeostasis by acting as a calcium-leak channel. Negatively regulates autophagy and autophagosome formation, especially during periods of nutrient deprivation, and reduces cell survival during starvation. The sequence is that of Bax inhibitor 1 (TMBIM6) from Bos taurus (Bovine).